The sequence spans 510 residues: ATP synthase subunit alpha, mitochondrial (510 aa).

An ATP-binding site is contributed by 171–178 (GDRQTGKT).

It belongs to the ATPase alpha/beta chains family. As to quaternary structure, F-type ATPases have 2 components, CF(1) - the catalytic core - and CF(0) - the membrane proton channel. CF(1) has five subunits: alpha(3), beta(3), gamma(1), delta(1), epsilon(1). CF(0) has three main subunits: a, b and c.

Its subcellular location is the mitochondrion. It is found in the mitochondrion inner membrane. Functionally, mitochondrial membrane ATP synthase (F(1)F(0) ATP synthase or Complex V) produces ATP from ADP in the presence of a proton gradient across the membrane which is generated by electron transport complexes of the respiratory chain. F-type ATPases consist of two structural domains, F(1) - containing the extramembraneous catalytic core, and F(0) - containing the membrane proton channel, linked together by a central stalk and a peripheral stalk. During catalysis, ATP synthesis in the catalytic domain of F(1) is coupled via a rotary mechanism of the central stalk subunits to proton translocation. Subunits alpha and beta form the catalytic core in F(1). Rotation of the central stalk against the surrounding alpha(3)beta(3) subunits leads to hydrolysis of ATP in three separate catalytic sites on the beta subunits. Subunit alpha does not bear the catalytic high-affinity ATP-binding sites. In Helianthus annuus (Common sunflower), this protein is ATP synthase subunit alpha, mitochondrial (ATPA).